The sequence spans 517 residues: Crotonobetaine/carnitine--CoA ligase (517 aa).

It belongs to the ATP-dependent AMP-binding enzyme family.

It catalyses the reaction 4-(trimethylamino)butanoate + ATP + CoA = 4-(trimethylamino)butanoyl-CoA + AMP + diphosphate. It carries out the reaction crotonobetaine + ATP + CoA = crotonobetainyl-CoA + AMP + diphosphate. The enzyme catalyses (R)-carnitine + ATP + CoA = (R)-carnitinyl-CoA + AMP + diphosphate. It participates in amine and polyamine metabolism; carnitine metabolism. Functionally, catalyzes the transfer of CoA to carnitine, generating the initial carnitinyl-CoA needed for the CaiB reaction cycle. Also has activity toward crotonobetaine and gamma-butyrobetaine. This chain is Crotonobetaine/carnitine--CoA ligase, found in Escherichia coli O8 (strain IAI1).